Consider the following 172-residue polypeptide: C-phycocyanin beta chain (172 aa).

Asn72 carries the N4-methylasparagine modification. (2R,3E)-phycocyanobilin contacts are provided by Cys82 and Cys153.

Belongs to the phycobiliprotein family. In terms of assembly, heterodimer of an alpha and a beta subunit, which further assembles into trimers and the trimers into hexamers. The basic functional unit of phycobiliproteins is a ring-shaped hexamer formed from two back-to-back trimers contacting via the alpha chain subunits. The trimers are composed of alpha/beta subunit heterodimers arranged around a three-fold axis of symmetry. The phycoerythrins also contain a gamma subunit which is located in the center of the hexamer. Post-translationally, contains two covalently linked bilin chromophores.

The protein localises to the plastid. The protein resides in the chloroplast thylakoid membrane. Functionally, light-harvesting photosynthetic bile pigment-protein from the phycobiliprotein complex (phycobilisome, PBS). Phycocyanin is the major phycobiliprotein in the PBS rod. This Pyropia yezoensis (Susabi-nori) protein is C-phycocyanin beta chain (cpcB).